A 231-amino-acid chain; its full sequence is Uridylate kinase (231 aa).

9-12 (KLSG) provides a ligand contact to ATP. UMP is bound at residue glycine 49. Residues glycine 50 and arginine 54 each contribute to the ATP site. UMP is bound by residues aspartate 69 and 130 to 137 (AGMPYFST). Residues asparagine 158, tyrosine 164, and aspartate 167 each contribute to the ATP site.

Belongs to the UMP kinase family. Homohexamer.

It is found in the cytoplasm. It carries out the reaction UMP + ATP = UDP + ADP. It participates in pyrimidine metabolism; CTP biosynthesis via de novo pathway; UDP from UMP (UMPK route): step 1/1. Its activity is regulated as follows. Inhibited by UTP. Its function is as follows. Catalyzes the reversible phosphorylation of UMP to UDP. The chain is Uridylate kinase from Tropheryma whipplei (strain Twist) (Whipple's bacillus).